We begin with the raw amino-acid sequence, 86 residues long: MVRVMVVIRIFGTGCPKCNQTYENVKKAVEELGIDAEIVKVTDVNEIAEWVFVTPGVAFDDVIVFEGKIPSVEEIKEELKSYLEGK.

Catalysis depends on nucleophile residues Cys-15 and Cys-18. Residues Cys-15 and Cys-18 are joined by a disulfide bond.

It belongs to the glutaredoxin family.

Functionally, does not function as a glutathione-disulfide oxidoreductase in the presence of glutathione and glutathione reductase. Has low thioredoxin activity in vitro. The protein is Thioredoxin of Methanocaldococcus jannaschii (strain ATCC 43067 / DSM 2661 / JAL-1 / JCM 10045 / NBRC 100440) (Methanococcus jannaschii).